Consider the following 137-residue polypeptide: Large ribosomal subunit protein eL28 (137 aa).

At Ser-2 the chain carries N-acetylserine. Glycyl lysine isopeptide (Lys-Gly) (interchain with G-Cter in SUMO2) cross-links involve residues Lys-58 and Lys-65. Ser-115 is subject to Phosphoserine.

It belongs to the eukaryotic ribosomal protein eL28 family. As to quaternary structure, component of the large ribosomal subunit.

The protein resides in the cytoplasm. Its function is as follows. Component of the large ribosomal subunit. The ribosome is a large ribonucleoprotein complex responsible for the synthesis of proteins in the cell. The protein is Large ribosomal subunit protein eL28 (Rpl28) of Mus musculus (Mouse).